We begin with the raw amino-acid sequence, 441 residues long: Trigger factor (441 aa).

Residues 175–257 (GDFISLSLHV…VNAVIEVVAP (83 aa)) enclose the PPIase FKBP-type domain.

The protein belongs to the FKBP-type PPIase family. Tig subfamily.

The protein localises to the cytoplasm. It carries out the reaction [protein]-peptidylproline (omega=180) = [protein]-peptidylproline (omega=0). Involved in protein export. Acts as a chaperone by maintaining the newly synthesized protein in an open conformation. Functions as a peptidyl-prolyl cis-trans isomerase. The sequence is that of Trigger factor from Chlamydia abortus (strain DSM 27085 / S26/3) (Chlamydophila abortus).